Consider the following 66-residue polypeptide: Large ribosomal subunit protein bL31 (66 aa).

Zn(2+) contacts are provided by Cys-16, Cys-18, Cys-36, and Cys-39.

This sequence belongs to the bacterial ribosomal protein bL31 family. Type A subfamily. Part of the 50S ribosomal subunit. The cofactor is Zn(2+).

Functionally, binds the 23S rRNA. The sequence is that of Large ribosomal subunit protein bL31 from Sulfurovum sp. (strain NBC37-1).